Consider the following 1940-residue polypeptide: Rho GTPase-activating protein 32 (1940 aa).

The PX; atypical domain maps to Ser-154–Gly-248. The region spanning Pro-262–Asp-324 is the SH3 domain. The region spanning Cys-375–Phe-570 is the Rho-GAP domain. Disordered stretches follow at residues Phe-646–Ser-746, Arg-1035–Thr-1163, Phe-1219–Arg-1264, Lys-1430–Asp-1454, and Arg-1675–Ala-1786. The span at Pro-1047 to His-1061 shows a compositional bias: polar residues. 2 stretches are compositionally biased toward low complexity: residues Leu-1081–Ala-1094 and Ser-1145–Thr-1163. The span at Glu-1691–Thr-1707 shows a compositional bias: basic and acidic residues. The segment covering Pro-1725–Ser-1734 has biased composition (polar residues). Residues Met-1736 to Ser-1755 show a composition bias toward basic and acidic residues.

The protein belongs to the PX domain-containing GAP family.

Its subcellular location is the cytoplasm. It localises to the membrane. The protein localises to the cell membrane. Functionally, GTPase-activating protein (GAP) promoting GTP hydrolysis on RHOA, CDC42 and RAC1 small GTPases. The polypeptide is Rho GTPase-activating protein 32 (arhgap32) (Xenopus laevis (African clawed frog)).